The primary structure comprises 547 residues: Glucose-6-phosphate isomerase (547 aa).

Residue Glu355 is the Proton donor of the active site. Active-site residues include His386 and Lys512.

Belongs to the GPI family.

It localises to the cytoplasm. It carries out the reaction alpha-D-glucose 6-phosphate = beta-D-fructose 6-phosphate. It functions in the pathway carbohydrate biosynthesis; gluconeogenesis. It participates in carbohydrate degradation; glycolysis; D-glyceraldehyde 3-phosphate and glycerone phosphate from D-glucose: step 2/4. Its function is as follows. Catalyzes the reversible isomerization of glucose-6-phosphate to fructose-6-phosphate. The chain is Glucose-6-phosphate isomerase from Corynebacterium diphtheriae (strain ATCC 700971 / NCTC 13129 / Biotype gravis).